We begin with the raw amino-acid sequence, 84 residues long: Protein Tlp homolog (84 aa).

The tract at residues 1-20 (MGKEERYTKKPKPDDRSDNV) is disordered.

It belongs to the Tlp family.

This Caldanaerobacter subterraneus subsp. tengcongensis (strain DSM 15242 / JCM 11007 / NBRC 100824 / MB4) (Thermoanaerobacter tengcongensis) protein is Protein Tlp homolog.